A 379-amino-acid chain; its full sequence is Nematocin receptor 1 (379 aa).

Residues 19–48 lie on the Extracellular side of the membrane; sequence HNLYLFQMLELQENITDSQPMDPPSLEIMM. N-linked (GlcNAc...) asparagine glycosylation occurs at Asn32. A helical membrane pass occupies residues 49–69; that stretch reads LHHLMIILVTLFGNTLLIYVI. Residues 70 to 95 are Cytoplasmic-facing; that stretch reads YKNNAVLRRKRVTPVQMLMLHMCAAD. A helical membrane pass occupies residues 96–116; sequence ILFALISVGPTMAITATVPFF. The Extracellular segment spans residues 117 to 124; it reads YGPNLLCK. Cysteines 123 and 196 form a disulfide. A helical transmembrane segment spans residues 125 to 145; sequence LTKFLQVIPMYASSFLLVAIS. The Cytoplasmic segment spans residues 146-168; the sequence is ADRYQAICRPLASMKSSIYNRPA. A helical transmembrane segment spans residues 169-189; it reads LYSGIAWTAAILFSTPQLYLF. The Extracellular portion of the chain corresponds to 190 to 207; sequence EKRNGDCSENYTTALQYQ. The N-linked (GlcNAc...) asparagine glycan is linked to Asn199. The chain crosses the membrane as a helical span at residues 208–228; that stretch reads LYVCLFNSVVWLLPSAIAGWL. Residues 229–289 lie on the Cytoplasmic side of the membrane; the sequence is YLCVCKAVWK…DRRRVQTVKL (61 aa). A helical transmembrane segment spans residues 290-310; it reads TLTIVAANFVLWAPFCITSVI. Residues 311 to 320 are Extracellular-facing; the sequence is DAVWPTAINS. An N-linked (GlcNAc...) asparagine glycan is attached at Asn319. A helical transmembrane segment spans residues 321-343; sequence TFATYIMFFGNLNSCMNPWLWFH. At 344 to 379 the chain is on the cytoplasmic side; the sequence is FNRKQLKRACPCRKSSEPLIQSLVYVHVMTSEQSDF.

Belongs to the G-protein coupled receptor 1 family. Vasopressin/oxytocin receptor subfamily. In terms of tissue distribution, detected in the left ASE gustatory neuron, the chemosensory neuron pairs ASH and ADF, and the PQR tail neuron. In males, detected in hook and tail sensory neurons involved in vulval sensing and hermaphrodite contact, and in spicule protractor muscles.

It is found in the cell membrane. Receptor for nematocin. The activity of this receptor is mediated by G proteins which activate a phosphatidylinositol-calcium second messenger system. The activity of this receptor may be modulated by ntr-2, leading to reduced intracellular cAMP production. Plays a role in gustatory associative learning. Also plays a role in male mating behavior. The chain is Nematocin receptor 1 from Caenorhabditis elegans.